The following is a 72-amino-acid chain: MLITWQDLSPETLENLIESFVLREGTDYGEHERTLEQKVADVKRQLQCGEAVLVWSELHETVNIMPRSQFRE.

Belongs to the UPF0270 family.

This is UPF0270 protein YheU from Shigella dysenteriae serotype 1 (strain Sd197).